The following is a 331-amino-acid chain: B-box zinc finger protein 21 (331 aa).

C5, C8, C28, H34, C60, C63, C83, and H93 together coordinate Zn(2+). A B box-type 1; atypical zinc finger spans residues 5-47 (CDVCDKEEASVFCTADEASLCGGCDHQVHHANKLASKHLRFSL). The B box-type 2; atypical zinc-finger motif lies at 60–102 (CDICQDKKALLFCQQDRAILCKDCDSSIHAANEHTKKHDRFLL). 2 stretches are compositionally biased toward low complexity: residues 115-126 (KPTSKSSSSSSS) and 228-238 (NNNNNNNNNNN). Disordered stretches follow at residues 115-167 (KPTS…GGDA) and 209-241 (DDDG…NTVS).

As to quaternary structure, interacts with COP1, HY5 and BBX32. Interacts with FLZ1.

The protein resides in the nucleus. In terms of biological role, transcription activator that acts as a positive regulator of seedling photomorphogenesis. Acts downstream of COP1 and play an important role in early and long-term adjustment of the shade avoidance syndrome (SAS) responses in natural environments. This Arabidopsis thaliana (Mouse-ear cress) protein is B-box zinc finger protein 21.